The following is a 476-amino-acid chain: Siroheme synthase (476 aa).

Positions 1–204 are precorrin-2 dehydrogenase /sirohydrochlorin ferrochelatase; sequence MDYFPVFLNI…GKDQAAQDYL (204 aa). NAD(+) contacts are provided by residues 22-23 and 43-44; these read SV and PT. Ser129 carries the post-translational modification Phosphoserine. Residues 218-476 are uroporphyrinogen-III C-methyltransferase; that stretch reads GEVYLVGAGP…GNTPGYSKHP (259 aa). Pro227 provides a ligand contact to S-adenosyl-L-methionine. The active-site Proton acceptor is the Asp250. Lys272 functions as the Proton donor in the catalytic mechanism. S-adenosyl-L-methionine contacts are provided by residues 303–305, Ile308, 333–334, Met385, and Gly414; these read GGD and TA.

In the N-terminal section; belongs to the precorrin-2 dehydrogenase / sirohydrochlorin ferrochelatase family. The protein in the C-terminal section; belongs to the precorrin methyltransferase family.

It catalyses the reaction uroporphyrinogen III + 2 S-adenosyl-L-methionine = precorrin-2 + 2 S-adenosyl-L-homocysteine + H(+). The catalysed reaction is precorrin-2 + NAD(+) = sirohydrochlorin + NADH + 2 H(+). It carries out the reaction siroheme + 2 H(+) = sirohydrochlorin + Fe(2+). It participates in cofactor biosynthesis; adenosylcobalamin biosynthesis; precorrin-2 from uroporphyrinogen III: step 1/1. The protein operates within cofactor biosynthesis; adenosylcobalamin biosynthesis; sirohydrochlorin from precorrin-2: step 1/1. It functions in the pathway porphyrin-containing compound metabolism; siroheme biosynthesis; precorrin-2 from uroporphyrinogen III: step 1/1. Its pathway is porphyrin-containing compound metabolism; siroheme biosynthesis; siroheme from sirohydrochlorin: step 1/1. It participates in porphyrin-containing compound metabolism; siroheme biosynthesis; sirohydrochlorin from precorrin-2: step 1/1. Its function is as follows. Multifunctional enzyme that catalyzes the SAM-dependent methylations of uroporphyrinogen III at position C-2 and C-7 to form precorrin-2 via precorrin-1. Then it catalyzes the NAD-dependent ring dehydrogenation of precorrin-2 to yield sirohydrochlorin. Finally, it catalyzes the ferrochelation of sirohydrochlorin to yield siroheme. This Nitrosomonas eutropha (strain DSM 101675 / C91 / Nm57) protein is Siroheme synthase.